We begin with the raw amino-acid sequence, 284 residues long: Pantothenate synthetase (284 aa).

30–37 (MGNLHEGH) lines the ATP pocket. His-37 serves as the catalytic Proton donor. Gln-61 contacts (R)-pantoate. Gln-61 is a binding site for beta-alanine. 149–152 (GEKD) contacts ATP. Gln-155 provides a ligand contact to (R)-pantoate. ATP-binding positions include Val-178 and 186–189 (LSSR).

The protein belongs to the pantothenate synthetase family. In terms of assembly, homodimer.

The protein resides in the cytoplasm. The enzyme catalyses (R)-pantoate + beta-alanine + ATP = (R)-pantothenate + AMP + diphosphate + H(+). It participates in cofactor biosynthesis; (R)-pantothenate biosynthesis; (R)-pantothenate from (R)-pantoate and beta-alanine: step 1/1. In terms of biological role, catalyzes the condensation of pantoate with beta-alanine in an ATP-dependent reaction via a pantoyl-adenylate intermediate. This chain is Pantothenate synthetase, found in Yersinia pseudotuberculosis serotype O:1b (strain IP 31758).